Here is a 178-residue protein sequence, read N- to C-terminus: uncharacterized protein (178 aa).

This is an uncharacterized protein from Escherichia coli (strain K12).